Consider the following 476-residue polypeptide: Glutamate--tRNA ligase (476 aa).

A 'HIGH' region motif is present at residues 8-18 (PSPTGTLHIGT). Residues 247 to 251 (KLSKR) carry the 'KMSKS' region motif. Lys-250 serves as a coordination point for ATP.

It belongs to the class-I aminoacyl-tRNA synthetase family. Glutamate--tRNA ligase type 1 subfamily. In terms of assembly, monomer.

Its subcellular location is the cytoplasm. The catalysed reaction is tRNA(Glu) + L-glutamate + ATP = L-glutamyl-tRNA(Glu) + AMP + diphosphate. Catalyzes the attachment of glutamate to tRNA(Glu) in a two-step reaction: glutamate is first activated by ATP to form Glu-AMP and then transferred to the acceptor end of tRNA(Glu). The sequence is that of Glutamate--tRNA ligase from Synechococcus sp. (strain WH7803).